We begin with the raw amino-acid sequence, 444 residues long: Transcriptional coactivator nsrH (444 aa).

The HTH iclR-type domain occupies Ala74 to Leu144. Positions Ile104–Arg123 form a DNA-binding region, H-T-H motif.

The protein resides in the nucleus. In terms of biological role, transcriptional coactivator; part of the gene cluster that mediates the biosynthesis of the tetrahydroxanthone dimer neosartorin, which exhibits antibacterial activity. This chain is Transcriptional coactivator nsrH, found in Aspergillus novofumigatus (strain IBT 16806).